The sequence spans 78 residues: Omega-conotoxin-like SO-4 (78 aa).

A signal peptide spans methionine 1–alanine 22. Residues aspartate 23–lysine 42 constitute a propeptide that is removed on maturation. Cystine bridges form between cysteine 46–cysteine 62, cysteine 53–cysteine 65, and cysteine 61–cysteine 72.

It belongs to the conotoxin O1 superfamily. As to expression, expressed by the venom duct.

It is found in the secreted. Omega-conotoxins act at presynaptic membranes, they bind and block voltage-gated calcium channels (Cav). This Conus striatus (Striated cone) protein is Omega-conotoxin-like SO-4 (SO4).